Here is a 352-residue protein sequence, read N- to C-terminus: tRNA pseudouridine synthase D (352 aa).

The Nucleophile role is filled by D81. Positions 158–306 (GVPNYFGQQR…RHERRTLLLK (149 aa)) constitute a TRUD domain.

The protein belongs to the pseudouridine synthase TruD family.

It carries out the reaction uridine(13) in tRNA = pseudouridine(13) in tRNA. Responsible for synthesis of pseudouridine from uracil-13 in transfer RNAs. In Photobacterium profundum (strain SS9), this protein is tRNA pseudouridine synthase D.